The chain runs to 712 residues: Polyphosphate kinase (712 aa).

Asparagine 49 is a binding site for ATP. Residues arginine 398 and arginine 428 each contribute to the Mg(2+) site. Histidine 458 serves as the catalytic Phosphohistidine intermediate. 3 residues coordinate ATP: tyrosine 491, arginine 587, and histidine 615.

It belongs to the polyphosphate kinase 1 (PPK1) family. Mg(2+) is required as a cofactor. An intermediate of this reaction is the autophosphorylated ppk in which a phosphate is covalently linked to a histidine residue through a N-P bond.

It carries out the reaction [phosphate](n) + ATP = [phosphate](n+1) + ADP. Functionally, catalyzes the reversible transfer of the terminal phosphate of ATP to form a long-chain polyphosphate (polyP). The polypeptide is Polyphosphate kinase (Parasynechococcus marenigrum (strain WH8102)).